The chain runs to 462 residues: tRNA-2-methylthio-N(6)-dimethylallyladenosine synthase (462 aa).

The 116-residue stretch at 1-116 (MKLFIQTLGC…ITQVLERPKA (116 aa)) folds into the MTTase N-terminal domain. [4Fe-4S] cluster-binding residues include Cys10, Cys47, Cys79, Cys148, Cys152, and Cys155. A Radical SAM core domain is found at 134 to 370 (QGMGIKAHLN…NLHKEILSKK (237 aa)). The region spanning 372–436 (QLEIGRIHNV…GGGLMGRFIN (65 aa)) is the TRAM domain.

Belongs to the methylthiotransferase family. MiaB subfamily. In terms of assembly, monomer. It depends on [4Fe-4S] cluster as a cofactor.

It is found in the cytoplasm. It catalyses the reaction N(6)-dimethylallyladenosine(37) in tRNA + (sulfur carrier)-SH + AH2 + 2 S-adenosyl-L-methionine = 2-methylsulfanyl-N(6)-dimethylallyladenosine(37) in tRNA + (sulfur carrier)-H + 5'-deoxyadenosine + L-methionine + A + S-adenosyl-L-homocysteine + 2 H(+). In terms of biological role, catalyzes the methylthiolation of N6-(dimethylallyl)adenosine (i(6)A), leading to the formation of 2-methylthio-N6-(dimethylallyl)adenosine (ms(2)i(6)A) at position 37 in tRNAs that read codons beginning with uridine. This is tRNA-2-methylthio-N(6)-dimethylallyladenosine synthase from Helicobacter hepaticus (strain ATCC 51449 / 3B1).